The following is a 245-amino-acid chain: Adenylate kinase (245 aa).

15–20 (GSGKGT) is a binding site for ATP. The interval 35–64 (SSGDLLRDAVSKDTPLSQEIKSYLDQGKLL) is NMP. AMP-binding positions include Ser-36, Arg-41, 62–64 (KLL), 103–106 (GFPR), and Gln-110. Positions 143–176 (SRYICPACQGIYNEQQGFSSCPKCSVELIRRSDD) are LID. Residue Arg-144 coordinates ATP. Residues Cys-147 and Cys-150 each coordinate Zn(2+). Residue 153–154 (IY) participates in ATP binding. Positions 163 and 166 each coordinate Zn(2+). AMP contacts are provided by Arg-173 and Arg-184. Position 212 (Ala-212) interacts with ATP.

The protein belongs to the adenylate kinase family. As to quaternary structure, monomer.

It is found in the cytoplasm. The enzyme catalyses AMP + ATP = 2 ADP. Its pathway is purine metabolism; AMP biosynthesis via salvage pathway; AMP from ADP: step 1/1. Catalyzes the reversible transfer of the terminal phosphate group between ATP and AMP. Plays an important role in cellular energy homeostasis and in adenine nucleotide metabolism. In Chlamydia trachomatis serovar A (strain ATCC VR-571B / DSM 19440 / HAR-13), this protein is Adenylate kinase.